We begin with the raw amino-acid sequence, 365 residues long: Aminomethyltransferase (365 aa).

The protein belongs to the GcvT family. In terms of assembly, the glycine cleavage system is composed of four proteins: P, T, L and H.

The enzyme catalyses N(6)-[(R)-S(8)-aminomethyldihydrolipoyl]-L-lysyl-[protein] + (6S)-5,6,7,8-tetrahydrofolate = N(6)-[(R)-dihydrolipoyl]-L-lysyl-[protein] + (6R)-5,10-methylene-5,6,7,8-tetrahydrofolate + NH4(+). The glycine cleavage system catalyzes the degradation of glycine. This is Aminomethyltransferase from Synechococcus sp. (strain CC9902).